The primary structure comprises 623 residues: AM-toxin biosynthesis protein 12-2 (623 aa).

The segment at 110–129 (TIPGTSQAKNTEPDHQASGL) is disordered.

Its pathway is mycotoxin biosynthesis. In terms of biological role, part of the gene clusters that mediate the biosynthesis of AM-toxins, host-selective toxins (HSTs) causing Alternaria blotch on apple, a worldwide distributed disease. AM-toxins are cyclic depsipeptides containing the 3 residues 2-hydroxy-isovaleric acid (2-HIV), dehydroalanine, L-alanine which are common for all 3 AM-toxins I to III. The fourth precursor is L-alpha-amino-methoxyphenyl-valeric acid (L-Amv) for AM-toxin I, L-alpha-amino-phenyl-valeric acid (L-Apv) for AM-toxin II, and L-alpha-amino-hydroxyphenyl-valeric acid (L-Ahv) for AM-toxin III. AM-toxins have two target sites for affecting susceptible apple cells; they cause invagination of the plasma membrane and electrolyte loss and chloroplast disorganization. The non-ribosomal peptide synthetase AMT1 contains 4 catalytic modules and is responsible for activation of each residue in AM-toxin. The aldo-keto reductase AMT2 catalyzes the conversion of 2-keto-isovaleric acid (2-KIV) to 2-hydroxy-isovaleric acid (2-HIV), one of the precursor residues incorporated by AMT1 during AM-toxin biosynthesis, by reduction of its ketone to an alcohol. The cytochrome P450 monooxygenase AMT3 and the thioesterase AMT4 are also important for AM-toxin production, but their exact function within the AM-toxin biosynthesis are not known yet. Up to 21 proteins (including AMT1 to AMT4) are predicted to be involved in AM-toxin biosynthesis since their expression ishighly up-regulated in AM-toxin-producing cultures. The sequence is that of AM-toxin biosynthesis protein 12-2 from Alternaria alternata (Alternaria rot fungus).